The following is a 636-amino-acid chain: Protein SOSEKI 2 (636 aa).

The interval 9-103 (HKIEVIYLLS…YVLKALEVMD (95 aa)) is DIX-like oligomerization domain. Disordered stretches follow at residues 164 to 188 (VHNNMTGKANRNEQGDAYGTTSRVP), 281 to 304 (HGRLSRRSSDTLRDSNSVGNTVDI), 340 to 393 (VEGS…TSAK), and 499 to 524 (LGSGQASESFSPASPHAPQRPIVSRP). Polar residues-rich tracts occupy residues 375-390 (SSKSATQNSRPVTYET) and 499-510 (LGSGQASESFSP).

This sequence belongs to the SOSEKI family. As to quaternary structure, homodimer. Forms long polymer filaments with other SOKs proteins polymers crucial for polar localization and biological activity.

The protein localises to the cell membrane. In terms of biological role, SOSEKI proteins locally interpret global polarity cues and can influence cell division orientation to coordinate cell polarization relative to body axes. This is Protein SOSEKI 2 from Physcomitrium patens (Spreading-leaved earth moss).